The sequence spans 275 residues: Taurine transport system permease protein TauC (275 aa).

A run of 7 helical transmembrane segments spans residues 20-42, 87-107, 124-144, 146-166, 186-206, 209-229, and 236-256; these read LSRQ…WTVA, IMLA…AMGL, PVPP…GETS, ILLI…AGVK, VLWF…LRIG, VGWS…LGFM, and FLAT…AFLL. An ABC transmembrane type-1 domain is found at 80 to 264; that stretch reads LAASLTRIML…LLELGLRALQ (185 aa).

This sequence belongs to the binding-protein-dependent transport system permease family. CysTW subfamily.

The protein localises to the cell inner membrane. Its function is as follows. Part of a binding-protein-dependent transport system for taurine. Probably responsible for the translocation of the substrate across the membrane. The chain is Taurine transport system permease protein TauC (tauC) from Escherichia coli (strain K12).